Consider the following 313-residue polypeptide: Glucan 1,3-beta-glucosidase (313 aa).

Positions 1–23 (MRFSTTLATAATALFFTASQVSA) are cleaved as a signal peptide. The active-site Proton donor is the Glu124. Asn202 carries N-linked (GlcNAc...) asparagine glycosylation. The active-site Nucleophile is Glu233. Asn284 carries an N-linked (GlcNAc...) asparagine glycan.

This sequence belongs to the glycosyl hydrolase 17 family.

The protein resides in the secreted. It is found in the cell wall. It carries out the reaction Successive hydrolysis of beta-D-glucose units from the non-reducing ends of (1-&gt;3)-beta-D-glucans, releasing alpha-glucose.. Functionally, glucanases possibly play a role in cell expansion during growth, in cell-cell fusion during mating, and in spore release during sporulation. This enzyme may be involved in beta-glucan degradation and also function biosynthetically as a transglycosylase. The protein is Glucan 1,3-beta-glucosidase (BGL2) of Saccharomyces cerevisiae (strain ATCC 204508 / S288c) (Baker's yeast).